A 198-amino-acid polypeptide reads, in one-letter code: Imidazoleglycerol-phosphate dehydratase (198 aa).

It belongs to the imidazoleglycerol-phosphate dehydratase family.

It localises to the cytoplasm. The catalysed reaction is D-erythro-1-(imidazol-4-yl)glycerol 3-phosphate = 3-(imidazol-4-yl)-2-oxopropyl phosphate + H2O. It participates in amino-acid biosynthesis; L-histidine biosynthesis; L-histidine from 5-phospho-alpha-D-ribose 1-diphosphate: step 6/9. The sequence is that of Imidazoleglycerol-phosphate dehydratase from Janthinobacterium sp. (strain Marseille) (Minibacterium massiliensis).